The sequence spans 138 residues: Host cell factor C1 regulator 1 (138 aa).

The interaction with HCFC1 stretch occupies residues 76–79; that stretch reads DHPY. Residues 110–119 carry the Nuclear export signal motif; it reads IPEALRLLRL.

As to quaternary structure, interacts with HCFC1. In terms of tissue distribution, widely expressed.

The protein localises to the cytoplasm. Its subcellular location is the nucleus. Regulates HCFC1 activity by modulating its subcellular localization. Overexpression of HCFC1R1 leads to accumulation of HCFC1 in the cytoplasm. HCFC1R1-mediated export may provide the pool of cytoplasmic HCFC1 required for import of virion-derived VP16 into the nucleus. The polypeptide is Host cell factor C1 regulator 1 (HCFC1R1) (Homo sapiens (Human)).